The sequence spans 209 residues: Phosphoheptose isomerase (209 aa).

An SIS domain is found at 50-209; it reads IADTFREGGK…ELVEKMMGYD (160 aa). 65–67 serves as a coordination point for substrate; the sequence is NGG. Zn(2+) is bound by residues histidine 74 and glutamate 78. Residues glutamate 78, 109 to 110, 135 to 137, serine 140, and glutamine 188 contribute to the substrate site; these read ND and STS. The Zn(2+) site is built by glutamine 188 and histidine 196.

This sequence belongs to the SIS family. GmhA subfamily. Zn(2+) is required as a cofactor.

Its subcellular location is the cytoplasm. It carries out the reaction 2 D-sedoheptulose 7-phosphate = D-glycero-alpha-D-manno-heptose 7-phosphate + D-glycero-beta-D-manno-heptose 7-phosphate. Its pathway is carbohydrate biosynthesis; D-glycero-D-manno-heptose 7-phosphate biosynthesis; D-glycero-alpha-D-manno-heptose 7-phosphate and D-glycero-beta-D-manno-heptose 7-phosphate from sedoheptulose 7-phosphate: step 1/1. Functionally, catalyzes the isomerization of sedoheptulose 7-phosphate in D-glycero-D-manno-heptose 7-phosphate. This Chlorobaculum tepidum (strain ATCC 49652 / DSM 12025 / NBRC 103806 / TLS) (Chlorobium tepidum) protein is Phosphoheptose isomerase.